A 307-amino-acid polypeptide reads, in one-letter code: Bidirectional sugar transporter SWEET11 (307 aa).

At methionine 1 to threonine 14 the chain is on the extracellular side. A helical transmembrane segment spans residues leucine 15–phenylalanine 35. A MtN3/slv 1 domain is found at glycine 17–arginine 100. Residues leucine 36 to tyrosine 47 are Cytoplasmic-facing. The helical transmembrane segment at serine 48–valine 68 threads the bilayer. Over lysine 69–proline 74 the chain is Extracellular. A helical transmembrane segment spans residues leucine 75–valine 95. The Cytoplasmic segment spans residues tyrosine 96–alanine 107. The chain crosses the membrane as a helical span at residues phenylalanine 108–valine 128. At proline 129 to lysine 135 the chain is on the extracellular side. A helical transmembrane segment spans residues phenylalanine 136 to isoleucine 156. The 84-residue stretch at phenylalanine 136–proline 219 folds into the MtN3/slv 2 domain. At phenylalanine 157–methionine 168 the chain is on the cytoplasmic side. A helical transmembrane segment spans residues proline 169 to phenylalanine 189. Topologically, residues threonine 190–tyrosine 194 are extracellular. Residues valine 195–tryptophan 215 traverse the membrane as a helical segment. Residues tyrosine 216–valine 307 are Cytoplasmic-facing.

This sequence belongs to the SWEET sugar transporter family. Interacts with COPT1 and COPT2. Interacts with APX8. Mostly expressed in panicles and anthers. Also detected in leaves (leaf collar, leaf auricle, leaf ligule), roots, sheaths, culms and culm nodes.

Its subcellular location is the cell membrane. Its function is as follows. Mediates both low-affinity uptake and efflux of sugar across the plasma membrane. Required for pollen viability. Involved in the transport of copper, in cooperation with COPT1 and COPT2. Functionally, confers sensitivity to bacterial blight mediated by X.oryzae pv. oryzae (Xoo) in its Xa13 allelic form (e.g. cv. IR24), probably by providing the sugar required for the pathogen growth, or by reducing copper contents in xylem. However, a recessive resistance can be associated with the xa13 allele (in which the promoter is mutated leading to reduced induction upon pathogen infection, e.g. cv. IRBB13), specifically toward Xoo Philippine race 6 and Indian race PXO8. This Oryza sativa subsp. japonica (Rice) protein is Bidirectional sugar transporter SWEET11 (SWEET11).